The primary structure comprises 200 residues: NADH-quinone oxidoreductase subunit C (200 aa).

This sequence belongs to the complex I 30 kDa subunit family. NDH-1 is composed of 14 different subunits. Subunits NuoB, C, D, E, F, and G constitute the peripheral sector of the complex.

It localises to the cell inner membrane. It catalyses the reaction a quinone + NADH + 5 H(+)(in) = a quinol + NAD(+) + 4 H(+)(out). NDH-1 shuttles electrons from NADH, via FMN and iron-sulfur (Fe-S) centers, to quinones in the respiratory chain. The immediate electron acceptor for the enzyme in this species is believed to be ubiquinone. Couples the redox reaction to proton translocation (for every two electrons transferred, four hydrogen ions are translocated across the cytoplasmic membrane), and thus conserves the redox energy in a proton gradient. This Agrobacterium fabrum (strain C58 / ATCC 33970) (Agrobacterium tumefaciens (strain C58)) protein is NADH-quinone oxidoreductase subunit C.